The primary structure comprises 332 residues: Succinylglutamate desuccinylase (332 aa).

Positions 59, 62, and 151 each coordinate Zn(2+). Residue Glu215 is part of the active site.

The protein belongs to the AspA/AstE family. Succinylglutamate desuccinylase subfamily. Requires Zn(2+) as cofactor.

It carries out the reaction N-succinyl-L-glutamate + H2O = L-glutamate + succinate. Its pathway is amino-acid degradation; L-arginine degradation via AST pathway; L-glutamate and succinate from L-arginine: step 5/5. Its function is as follows. Transforms N(2)-succinylglutamate into succinate and glutamate. This chain is Succinylglutamate desuccinylase, found in Pseudomonas aeruginosa (strain UCBPP-PA14).